A 184-amino-acid polypeptide reads, in one-letter code: MLKYLVQRRFTSTFYELFPKTFPKKLPIWTIDQSRLRKEYRQLQAQHHPDMAQQGSEQSSTLNQAYHTLKDPLRRSQYMLKLLRNIDLTQEQTSNEVTTSDPQLLLKVLDIHDELSQMDDEAGVKLLEKQNKERIQDIEAQLGQCYNDKDYAAAVKLTVELKYWYNLAKAFKDWAPGKQLEMNH.

The N-terminal 10 residues, 1-10 (MLKYLVQRRF), are a transit peptide targeting the mitochondrion. The J domain maps to 13 to 82 (TFYELFPKTF…LRRSQYMLKL (70 aa)). Residues 48 to 50 (HPD) carry the HSP70 binding motif. Residues 71–184 (DPLRRSQYML…APGKQLEMNH (114 aa)) are interaction with ISU1.

Belongs to the HscB family. In terms of assembly, interacts with ISU1 and SSQ1.

The protein resides in the mitochondrion matrix. Its function is as follows. Co-chaperone required for the assembly of iron-sulfur (Fe/S) clusters in mitochondria. Stimulates the ATPase activity of its specialized Hsp70 chaperone partner SSQ1, to mediate the transfer of iron-sulfur clusters from ISU1 to GRX5. Binds to the substrate protein ISU1 and targets it to SSQ1. The chain is J-type co-chaperone JAC1, mitochondrial from Saccharomyces cerevisiae (strain ATCC 204508 / S288c) (Baker's yeast).